Reading from the N-terminus, the 98-residue chain is uncharacterized protein (98 aa).

This sequence belongs to the CFAP97 family. Expressed in a number of tissues including brain, thymus, lung, heart, liver, spleen, kidney and testis.

This is an uncharacterized protein from Mus musculus (Mouse).